Here is a 295-residue protein sequence, read N- to C-terminus: Uridine and thymidine phosphorylase (295 aa).

Phosphate is bound by residues Arg-81 and 125–128 (RLGT). Residues Gln-203 and Arg-205 each coordinate substrate.

Belongs to the PNP/UDP phosphorylase family. As to expression, expressed in hypodermis, pharynx, spermatheca and gonad.

It carries out the reaction uridine + phosphate = alpha-D-ribose 1-phosphate + uracil. It catalyses the reaction thymidine + phosphate = 2-deoxy-alpha-D-ribose 1-phosphate + thymine. The enzyme catalyses 2'-deoxyuridine + phosphate = 2-deoxy-alpha-D-ribose 1-phosphate + uracil. Its pathway is pyrimidine metabolism; UMP biosynthesis via salvage pathway; uracil from uridine (phosphorylase route): step 1/1. It functions in the pathway pyrimidine metabolism; dTMP biosynthesis via salvage pathway; dTMP from thymine: step 1/2. In terms of biological role, catalyzes the reversible phosphorylytic cleavage of uridine and thymidine to uracil and ribose-phosphate or thymine and deoxyribose-1-phosphate. The produced molecules are then utilized as carbon and energy sources or in the rescue of pyrimidine bases for nucleotide synthesis. Required for normal lifespan. This Caenorhabditis elegans protein is Uridine and thymidine phosphorylase.